Consider the following 188-residue polypeptide: Elongation factor P (188 aa).

Position 34 is an N6-(3,6-diaminohexanoyl)-5-hydroxylysine (K34).

Belongs to the elongation factor P family. Post-translationally, may be beta-lysylated on the epsilon-amino group of Lys-34 by the combined action of EpmA and EpmB, and then hydroxylated on the C5 position of the same residue by EpmC (if this protein is present). Lysylation is critical for the stimulatory effect of EF-P on peptide-bond formation. The lysylation moiety may extend toward the peptidyltransferase center and stabilize the terminal 3-CCA end of the tRNA. Hydroxylation of the C5 position on Lys-34 may allow additional potential stabilizing hydrogen-bond interactions with the P-tRNA.

The protein resides in the cytoplasm. It functions in the pathway protein biosynthesis; polypeptide chain elongation. In terms of biological role, involved in peptide bond synthesis. Alleviates ribosome stalling that occurs when 3 or more consecutive Pro residues or the sequence PPG is present in a protein, possibly by augmenting the peptidyl transferase activity of the ribosome. Modification of Lys-34 is required for alleviation. The protein is Elongation factor P of Aliivibrio fischeri (strain ATCC 700601 / ES114) (Vibrio fischeri).